The chain runs to 379 residues: Cytochrome b (379 aa).

The next 4 helical transmembrane spans lie at 33 to 53 (FGSL…FLAM), 77 to 98 (WLIR…YLHI), 113 to 133 (WNIG…GYVL), and 178 to 198 (FFAF…IHFF). Heme b-binding residues include histidine 83 and histidine 97. Positions 182 and 196 each coordinate heme b. Residue histidine 201 coordinates a ubiquinone. The next 4 helical transmembrane spans lie at 226–246 (IKDI…VLFS), 288–308 (LGGV…PMLH), 320–340 (FSQC…WIGG), and 347–367 (YITI…IVSR).

This sequence belongs to the cytochrome b family. As to quaternary structure, the cytochrome bc1 complex contains 11 subunits: 3 respiratory subunits (MT-CYB, CYC1 and UQCRFS1), 2 core proteins (UQCRC1 and UQCRC2) and 6 low-molecular weight proteins (UQCRH/QCR6, UQCRB/QCR7, UQCRQ/QCR8, UQCR10/QCR9, UQCR11/QCR10 and a cleavage product of UQCRFS1). This cytochrome bc1 complex then forms a dimer. The cofactor is heme b.

It is found in the mitochondrion inner membrane. Component of the ubiquinol-cytochrome c reductase complex (complex III or cytochrome b-c1 complex) that is part of the mitochondrial respiratory chain. The b-c1 complex mediates electron transfer from ubiquinol to cytochrome c. Contributes to the generation of a proton gradient across the mitochondrial membrane that is then used for ATP synthesis. This chain is Cytochrome b (MT-CYB), found in Dolichotis patagonum (Patagonian mara).